The primary structure comprises 341 residues: GTP-binding protein GTR2 (341 aa).

Residues Ser23, Ser24, Ser43, His124, and Asp127 each contribute to the GTP site.

This sequence belongs to the GTR/RAG GTP-binding protein family. In terms of assembly, heterodimer; with GTR1. Component of the GSE complex composed of GTR1, GTR2, SLM4, MEH1 and LTV1. Component of the EGO complex, at least composed of GTR2, SLM4 and MEH1. Interacts with GTR1; the interaction is direct.

Its subcellular location is the vacuole membrane. The enzyme catalyses GTP + H2O = GDP + phosphate + H(+). Functionally, GTPase involved in activation of the TORC1 signaling pathway, which promotes growth and represses autophagy in nutrient-rich conditions. Also required for TORC1 inactivation during nitrogen starvation. Required for intracellular sorting of GAP1 out of the endosome. Involved in the regulation of microautophagy. The protein is GTP-binding protein GTR2 of Saccharomyces cerevisiae (strain ATCC 204508 / S288c) (Baker's yeast).